Here is a 331-residue protein sequence, read N- to C-terminus: UPF0194 membrane protein YbhG (331 aa).

A signal peptide spans 1 to 19; sequence MKKPVVIGLAIAAIVAVIA. Positions 107–208 form a coiled coil; that stretch reads EEIAQAAAAV…LDLQDTTLIA (102 aa).

It belongs to the UPF0194 family.

Its subcellular location is the periplasm. The protein is UPF0194 membrane protein YbhG of Salmonella paratyphi A (strain ATCC 9150 / SARB42).